We begin with the raw amino-acid sequence, 351 residues long: Anthranilate phosphoribosyltransferase (351 aa).

5-phospho-alpha-D-ribose 1-diphosphate contacts are provided by residues Gly-92, 95 to 96 (GD), Thr-100, 102 to 105 (NIST), 120 to 128 (KHGNRAASS), and Ser-132. Gly-92 lines the anthranilate pocket. Ser-104 is a Mg(2+) binding site. Asn-123 lines the anthranilate pocket. Arg-178 is a binding site for anthranilate. Residues Asp-236 and Glu-237 each contribute to the Mg(2+) site.

This sequence belongs to the anthranilate phosphoribosyltransferase family. As to quaternary structure, homodimer. Mg(2+) is required as a cofactor.

It carries out the reaction N-(5-phospho-beta-D-ribosyl)anthranilate + diphosphate = 5-phospho-alpha-D-ribose 1-diphosphate + anthranilate. It functions in the pathway amino-acid biosynthesis; L-tryptophan biosynthesis; L-tryptophan from chorismate: step 2/5. Catalyzes the transfer of the phosphoribosyl group of 5-phosphorylribose-1-pyrophosphate (PRPP) to anthranilate to yield N-(5'-phosphoribosyl)-anthranilate (PRA). This chain is Anthranilate phosphoribosyltransferase, found in Deinococcus geothermalis (strain DSM 11300 / CIP 105573 / AG-3a).